The following is a 328-amino-acid chain: Trans-O-hydroxybenzylidenepyruvate hydratase-aldolase (328 aa).

It belongs to the DapA family. In terms of assembly, homotrimer.

It catalyses the reaction (3E)-4-(2-hydroxyphenyl)-2-oxobut-3-enoate + H2O = salicylaldehyde + pyruvate. The protein operates within aromatic compound metabolism; naphthalene degradation. Inhibited bye p-chloromercuribenzoate and salicylaldehyde. Activated by salicylate. Its function is as follows. Involved in the naphthalene and naphthalenesulfonate catabolic pathway. Catalyzes the transformation of trans-O-hydroxybenzylidenepyruvate (THBPA) to salicylaldehyde and pyruvate. The reaction is reversible. Can also use 2,4-dihydroxybenzalpyruvate (2,4-DHBP) and 2,6-dihydroxybenzalpyruvate (2,6-DHBP). The chain is Trans-O-hydroxybenzylidenepyruvate hydratase-aldolase (nsaE) from Sphingobium xenophagum.